The following is a 509-amino-acid chain: Inositol-3-phosphate synthase 1 (509 aa).

The protein belongs to the myo-inositol 1-phosphate synthase family. The cofactor is NAD(+). As to expression, highly expressed in anthers, but transcripts are undetectable in roots, leaves, flowers and embryos.

It localises to the cytoplasm. The enzyme catalyses D-glucose 6-phosphate = 1D-myo-inositol 3-phosphate. The protein operates within polyol metabolism; myo-inositol biosynthesis; myo-inositol from D-glucose 6-phosphate: step 1/2. Functionally, key enzyme in myo-inositol biosynthesis pathway that catalyzes the conversion of glucose 6-phosphate to 1-myo-inositol 1-phosphate in a NAD-dependent manner. Is a key enzyme in the phytic acid biosynthesis pathway in seeds. The protein is Inositol-3-phosphate synthase 1 of Oryza sativa subsp. japonica (Rice).